A 114-amino-acid chain; its full sequence is Histone H3-3 (114 aa).

Positions 1-17 (NTGGKAPRKHIAHKQAK) are enriched in basic residues. Residues 1-32 (NTGGKAPRKHIAHKQAKKSSAAAATGGVKKPH) are disordered. The segment covering 18-28 (KSSAAAATGGV) has biased composition (low complexity).

The protein belongs to the histone H3 family. As to quaternary structure, the nucleosome is a histone octamer containing two molecules each of H2A, H2B, H3 and H4 assembled in one H3-H4 heterotetramer and two H2A-H2B heterodimers. The octamer wraps approximately 147 bp of DNA.

The protein resides in the nucleus. It is found in the chromosome. Its function is as follows. Core component of nucleosome. Nucleosomes wrap and compact DNA into chromatin, limiting DNA accessibility to the cellular machineries which require DNA as a template. Histones thereby play a central role in transcription regulation, DNA repair, DNA replication and chromosomal stability. DNA accessibility is regulated via a complex set of post-translational modifications of histones, also called histone code, and nucleosome remodeling. This is Histone H3-3 (H3-3) from Stylonychia lemnae (Ciliate).